Reading from the N-terminus, the 369-residue chain is Methionine import ATP-binding protein MetN (369 aa).

In terms of domain architecture, ABC transporter spans 31–266; the sequence is VEMKDVRRMF…PQSPVTQSML (236 aa). 63-70 provides a ligand contact to ATP; that stretch reads GRSGAGKS.

Belongs to the ABC transporter superfamily. Methionine importer (TC 3.A.1.24) family. In terms of assembly, the complex is composed of two ATP-binding proteins (MetN), two transmembrane proteins (MetI) and a solute-binding protein (MetQ).

It localises to the cell inner membrane. It catalyses the reaction L-methionine(out) + ATP + H2O = L-methionine(in) + ADP + phosphate + H(+). It carries out the reaction D-methionine(out) + ATP + H2O = D-methionine(in) + ADP + phosphate + H(+). Its function is as follows. Part of the ABC transporter complex MetNIQ involved in methionine import. Responsible for energy coupling to the transport system. This chain is Methionine import ATP-binding protein MetN, found in Brucella abortus (strain 2308).